The chain runs to 298 residues: ATP phosphoribosyltransferase (298 aa).

The protein belongs to the ATP phosphoribosyltransferase family. Long subfamily. It depends on Mg(2+) as a cofactor.

Its subcellular location is the cytoplasm. The catalysed reaction is 1-(5-phospho-beta-D-ribosyl)-ATP + diphosphate = 5-phospho-alpha-D-ribose 1-diphosphate + ATP. It participates in amino-acid biosynthesis; L-histidine biosynthesis; L-histidine from 5-phospho-alpha-D-ribose 1-diphosphate: step 1/9. Feedback inhibited by histidine. In terms of biological role, catalyzes the condensation of ATP and 5-phosphoribose 1-diphosphate to form N'-(5'-phosphoribosyl)-ATP (PR-ATP). Has a crucial role in the pathway because the rate of histidine biosynthesis seems to be controlled primarily by regulation of HisG enzymatic activity. The polypeptide is ATP phosphoribosyltransferase (Vibrio campbellii (strain ATCC BAA-1116)).